We begin with the raw amino-acid sequence, 66 residues long: Small ribosomal subunit protein bS21 (66 aa).

The protein belongs to the bacterial ribosomal protein bS21 family.

The sequence is that of Small ribosomal subunit protein bS21 from Maridesulfovibrio salexigens (strain ATCC 14822 / DSM 2638 / NCIMB 8403 / VKM B-1763) (Desulfovibrio salexigens).